Reading from the N-terminus, the 238-residue chain is Ubiquinone biosynthesis O-methyltransferase (238 aa).

Arginine 36, glycine 56, aspartate 77, and methionine 125 together coordinate S-adenosyl-L-methionine.

Belongs to the methyltransferase superfamily. UbiG/COQ3 family.

It catalyses the reaction a 3-demethylubiquinol + S-adenosyl-L-methionine = a ubiquinol + S-adenosyl-L-homocysteine + H(+). The catalysed reaction is a 3-(all-trans-polyprenyl)benzene-1,2-diol + S-adenosyl-L-methionine = a 2-methoxy-6-(all-trans-polyprenyl)phenol + S-adenosyl-L-homocysteine + H(+). It functions in the pathway cofactor biosynthesis; ubiquinone biosynthesis. O-methyltransferase that catalyzes the 2 O-methylation steps in the ubiquinone biosynthetic pathway. This chain is Ubiquinone biosynthesis O-methyltransferase, found in Histophilus somni (strain 2336) (Haemophilus somnus).